The following is a 370-amino-acid chain: Protein RecA (370 aa).

Residues 1–20 (MSFEERRKKDSKESSSKEKD) are disordered. 78–85 (GPESSGKT) contributes to the ATP binding site.

This sequence belongs to the RecA family.

It localises to the cytoplasm. In terms of biological role, can catalyze the hydrolysis of ATP in the presence of single-stranded DNA, the ATP-dependent uptake of single-stranded DNA by duplex DNA, and the ATP-dependent hybridization of homologous single-stranded DNAs. It interacts with LexA causing its activation and leading to its autocatalytic cleavage. The polypeptide is Protein RecA (Prochlorococcus marinus (strain MIT 9515)).